Here is a 547-residue protein sequence, read N- to C-terminus: KsdD-like steroid dehydrogenase MSMEG_5835 (547 aa).

FAD is bound at residue 5–36; sequence DVIVVGAGLAGLVAACELVERGHSVIIVDQEN.

The protein belongs to the FAD-dependent oxidoreductase 2 family. It depends on FAD as a cofactor.

The protein operates within lipid metabolism; steroid biosynthesis. Functionally, able to catalyze the elimination of the C-1 and C-2 hydrogen atoms of the A-ring from the polycyclic ring structure of 3-ketosteroids, but the ketosteroid dehydrogenase activity is low compared to KsdD in the cholesterol degradation process. The low activity could be due to different substrate specificity. This Mycolicibacterium smegmatis (strain ATCC 700084 / mc(2)155) (Mycobacterium smegmatis) protein is KsdD-like steroid dehydrogenase MSMEG_5835.